We begin with the raw amino-acid sequence, 128 residues long: Lutropin subunit beta (128 aa).

The N-terminal stretch at 1 to 20 is a signal peptide; it reads MERLQGLLLWLLLSPSVVWA. 5 disulfides stabilise this stretch: cysteine 29/cysteine 77, cysteine 43/cysteine 92, cysteine 54/cysteine 108, cysteine 58/cysteine 110, and cysteine 113/cysteine 120. Asparagine 33 carries N-linked (GlcNAc...) asparagine glycosylation.

This sequence belongs to the glycoprotein hormones subunit beta family. Heterodimer of a common alpha chain and a unique beta chain which confers biological specificity to thyrotropin, lutropin, follitropin and gonadotropin.

The protein resides in the secreted. In terms of biological role, promotes spermatogenesis and ovulation by stimulating the testes and ovaries to synthesize steroids. The protein is Lutropin subunit beta (LHB) of Phodopus sungorus (Striped hairy-footed hamster).